We begin with the raw amino-acid sequence, 302 residues long: Dihydroorotate dehydrogenase B (NAD(+)), catalytic subunit (302 aa).

FMN-binding positions include S23 and 47-48 (KG). Substrate-binding positions include K47 and 71–75 (NSVGL). FMN-binding residues include N101 and N128. N128 lines the substrate pocket. C131 (nucleophile) is an active-site residue. FMN is bound by residues K166 and I192. 193–194 (NT) serves as a coordination point for substrate. FMN-binding positions include G218, 244–245 (GG), and 266–267 (GT).

Belongs to the dihydroorotate dehydrogenase family. Type 1 subfamily. Heterotetramer of 2 PyrK and 2 PyrD type B subunits. FMN serves as cofactor.

It is found in the cytoplasm. The enzyme catalyses (S)-dihydroorotate + NAD(+) = orotate + NADH + H(+). The protein operates within pyrimidine metabolism; UMP biosynthesis via de novo pathway; orotate from (S)-dihydroorotate (NAD(+) route): step 1/1. Its function is as follows. Catalyzes the conversion of dihydroorotate to orotate with NAD(+) as electron acceptor. The chain is Dihydroorotate dehydrogenase B (NAD(+)), catalytic subunit (pyrD) from Alkaliphilus oremlandii (strain OhILAs) (Clostridium oremlandii (strain OhILAs)).